We begin with the raw amino-acid sequence, 295 residues long: Pyridoxal 5'-phosphate synthase subunit PdxS (295 aa).

Position 25 (D25) interacts with D-ribose 5-phosphate. K82 acts as the Schiff-base intermediate with D-ribose 5-phosphate in catalysis. Position 154 (G154) interacts with D-ribose 5-phosphate. Position 166 (R166) interacts with D-glyceraldehyde 3-phosphate. D-ribose 5-phosphate contacts are provided by residues G215 and 236–237; that span reads GS.

The protein belongs to the PdxS/SNZ family. In terms of assembly, in the presence of PdxT, forms a dodecamer of heterodimers.

The enzyme catalyses aldehydo-D-ribose 5-phosphate + D-glyceraldehyde 3-phosphate + L-glutamine = pyridoxal 5'-phosphate + L-glutamate + phosphate + 3 H2O + H(+). The protein operates within cofactor biosynthesis; pyridoxal 5'-phosphate biosynthesis. Catalyzes the formation of pyridoxal 5'-phosphate from ribose 5-phosphate (RBP), glyceraldehyde 3-phosphate (G3P) and ammonia. The ammonia is provided by the PdxT subunit. Can also use ribulose 5-phosphate and dihydroxyacetone phosphate as substrates, resulting from enzyme-catalyzed isomerization of RBP and G3P, respectively. The chain is Pyridoxal 5'-phosphate synthase subunit PdxS from Macrococcus caseolyticus (strain JCSC5402) (Macrococcoides caseolyticum).